Reading from the N-terminus, the 341-residue chain is tRNA N6-adenosine threonylcarbamoyltransferase (341 aa).

Residues H111 and H115 each coordinate Fe cation. Residues 134 to 138 (LVSGG), D167, G180, and N276 each bind substrate. D304 contacts Fe cation.

The protein belongs to the KAE1 / TsaD family. It depends on Fe(2+) as a cofactor.

It localises to the cytoplasm. It carries out the reaction L-threonylcarbamoyladenylate + adenosine(37) in tRNA = N(6)-L-threonylcarbamoyladenosine(37) in tRNA + AMP + H(+). Its function is as follows. Required for the formation of a threonylcarbamoyl group on adenosine at position 37 (t(6)A37) in tRNAs that read codons beginning with adenine. Is involved in the transfer of the threonylcarbamoyl moiety of threonylcarbamoyl-AMP (TC-AMP) to the N6 group of A37, together with TsaE and TsaB. TsaD likely plays a direct catalytic role in this reaction. The sequence is that of tRNA N6-adenosine threonylcarbamoyltransferase from Stutzerimonas stutzeri (strain A1501) (Pseudomonas stutzeri).